Consider the following 428-residue polypeptide: 3-phosphoshikimate 1-carboxyvinyltransferase (428 aa).

3 residues coordinate 3-phosphoshikimate: Lys-22, Ser-23, and Arg-27. Phosphoenolpyruvate is bound at residue Lys-22. 2 residues coordinate phosphoenolpyruvate: Gly-96 and Arg-124. 3-phosphoshikimate contacts are provided by Ser-170, Ser-171, Gln-172, Ser-198, Asp-314, Asn-337, and Lys-341. Gln-172 contacts phosphoenolpyruvate. Residue Asp-314 is the Proton acceptor of the active site. Phosphoenolpyruvate contacts are provided by Arg-345, Arg-387, and Lys-412.

Belongs to the EPSP synthase family. As to quaternary structure, monomer.

It localises to the cytoplasm. The enzyme catalyses 3-phosphoshikimate + phosphoenolpyruvate = 5-O-(1-carboxyvinyl)-3-phosphoshikimate + phosphate. It participates in metabolic intermediate biosynthesis; chorismate biosynthesis; chorismate from D-erythrose 4-phosphate and phosphoenolpyruvate: step 6/7. Its function is as follows. Catalyzes the transfer of the enolpyruvyl moiety of phosphoenolpyruvate (PEP) to the 5-hydroxyl of shikimate-3-phosphate (S3P) to produce enolpyruvyl shikimate-3-phosphate and inorganic phosphate. The chain is 3-phosphoshikimate 1-carboxyvinyltransferase from Vibrio vulnificus (strain YJ016).